The chain runs to 123 residues: MIIGIGTDIIEISRIERAIQRTNTFIERSFTCNEIAYFKLKGFKGNVVAGNFAAKEAISKAIGTGFRGFGLKDIEILRNELGKPIVNLSDKIYNLLEIKEFNMHVSISHSNENAIAYAVMEAI.

Asp8 and Glu56 together coordinate Mg(2+).

Belongs to the P-Pant transferase superfamily. AcpS family. It depends on Mg(2+) as a cofactor.

The protein resides in the cytoplasm. The catalysed reaction is apo-[ACP] + CoA = holo-[ACP] + adenosine 3',5'-bisphosphate + H(+). Its function is as follows. Transfers the 4'-phosphopantetheine moiety from coenzyme A to a Ser of acyl-carrier-protein. The protein is Holo-[acyl-carrier-protein] synthase of Clostridium beijerinckii (strain ATCC 51743 / NCIMB 8052) (Clostridium acetobutylicum).